A 63-amino-acid chain; its full sequence is MEDLHVIAVCILALTVLSGVGAVLSCCRWCCSNPFPPSLSSVQAKDSRSVRETIKNIEGASAQ.

This is an uncharacterized protein from Avena byzantina (Oat).